A 502-amino-acid polypeptide reads, in one-letter code: Cysteine protease RavZ (502 aa).

Short sequence motifs (LIR) lie at residues 9–23 (DKLIVDEFEELGEQE) and 23–37 (ESDIDEFDLLEGDEK). The segment at 49–325 (SIYPPETSWE…ESALTEGKTL (277 aa)) is catalytic region. Residues H176 and D197 contribute to the active site. The tract at residues 211–217 (YFKGKYR) is alpha-3 helix. C258 is an active-site residue. The interval 326–431 (PVQLSEFIVA…VLPCVKFDDT (106 aa)) is membrane targeting region. The LIR 3 motif lies at 429-443 (DDTIDDFVTIEKDEL).

The protein localises to the secreted. The protein resides in the host cytoplasmic vesicle membrane. The catalysed reaction is [protein]-C-terminal L-amino acid-glycyl-phosphatidylethanolamide + H2O = a 1,2-diacyl-sn-glycero-3-phosphoethanolamine-N-glycine + [protein]-C-terminal &lt;stereo&gt;L-&lt;/stereo&gt;amino acid. The enzyme catalyses [protein]-C-terminal L-amino acid-glycyl-phosphatidylserine + H2O = 1,2-diacyl-sn-glycero-3-phospho-L-serine-N-glycine + [protein]-C-terminal &lt;stereo&gt;L-&lt;/stereo&gt;amino acid. In terms of biological role, cysteine protease effector that inhibits host cell autophagy by targeting lipid-conjugated ATG8 family proteins on pre-autophagosomal structures. Specifically hydrolyzes the amide bond between the C-terminal glycine residue and an adjacent aromatic residue in ATG8 proteins conjugated to phosphatidylethanolamine (PE), producing an ATG8 protein that cannot be reconjugated by host ATG7 and ATG3. Mechanistically, Ravz interacts with ATG8 proteins conjugated to PE via its LIR motifs, extracts them from the membrane of autophagosomes and integrates the PE part into its own lipid-binding site. It then removes the lipid component of the ATG8 protein. Also able to mediate delipidation of ATG8 proteins conjugated to phosphatidylserine (PS) during non-canonical autophagy. Inhibits host ubiquitin recruitment to bacteria-containing vacuoles, suggesting that it is able to mediate delipidation of other proteins in addition to ATG8 proteins. It is however not involved in the exclusion of autophagy adapters from bacteria-containing vacuoles decorated with ubiquitin. This is Cysteine protease RavZ from Legionella pneumophila subsp. pneumophila (strain Philadelphia 1 / ATCC 33152 / DSM 7513).